Consider the following 174-residue polypeptide: Adenylate kinase (174 aa).

Residues 12–41 (STGDMLRAAIKAGTPLGLEAKKIIDEGGLV) are NMP. AMP-binding positions include Thr-13, Arg-18, 39-41 (GLV), 67-70 (GFPR), and Gln-74. An LID region spans residues 104-141 (GRRVHLASGRTYHVTYNPPKVEGKDDVTGEDLIQRDDD). ATP-binding positions include Arg-105 and 114–115 (TY). Arg-138 and Arg-149 together coordinate AMP.

Belongs to the adenylate kinase family. Monomer.

Its subcellular location is the cytoplasm. The catalysed reaction is AMP + ATP = 2 ADP. The protein operates within purine metabolism; AMP biosynthesis via salvage pathway; AMP from ADP: step 1/1. Functionally, catalyzes the reversible transfer of the terminal phosphate group between ATP and AMP. Plays an important role in cellular energy homeostasis and in adenine nucleotide metabolism. This Neisseria flavescens protein is Adenylate kinase.